A 402-amino-acid chain; its full sequence is Flavohemoprotein (402 aa).

Positions 1 to 136 constitute a Globin domain; that stretch reads MLSEKTIEIV…IADAFISIEA (136 aa). His-85 lines the heme b pocket. Catalysis depends on charge relay system residues Tyr-95 and Glu-135. The segment at 147-402 is reductase; that stretch reads GGWKDFRNFV…EFFGPAASLQ (256 aa). The region spanning 150 to 260 is the FAD-binding FR-type domain; that stretch reads KDFRNFVVVK…SAPAGDFVLN (111 aa). Residues Tyr-188 and 204–207 contribute to the FAD site; that span reads RQYS. 273–278 is an NADP(+) binding site; sequence GVGITP. Residue 394–397 coordinates FAD; sequence FFGP.

This sequence belongs to the globin family. Two-domain flavohemoproteins subfamily. The protein in the C-terminal section; belongs to the flavoprotein pyridine nucleotide cytochrome reductase family. Heme b is required as a cofactor. The cofactor is FAD.

It catalyses the reaction 2 nitric oxide + NADPH + 2 O2 = 2 nitrate + NADP(+) + H(+). It carries out the reaction 2 nitric oxide + NADH + 2 O2 = 2 nitrate + NAD(+) + H(+). Functionally, is involved in NO detoxification in an aerobic process, termed nitric oxide dioxygenase (NOD) reaction that utilizes O(2) and NAD(P)H to convert NO to nitrate, which protects the bacterium from various noxious nitrogen compounds. Therefore, plays a central role in the inducible response to nitrosative stress. The protein is Flavohemoprotein of Bacillus thuringiensis subsp. konkukian (strain 97-27).